Reading from the N-terminus, the 92-residue chain is UPF0237 protein MM_0082 (92 aa).

One can recognise an ACT domain in the interval 7–81; that stretch reads IITVIGSDRV…KSLGVEVKVQ (75 aa).

This sequence belongs to the UPF0237 family.

The sequence is that of UPF0237 protein MM_0082 from Methanosarcina mazei (strain ATCC BAA-159 / DSM 3647 / Goe1 / Go1 / JCM 11833 / OCM 88) (Methanosarcina frisia).